A 198-amino-acid chain; its full sequence is Holliday junction branch migration complex subunit RuvA (198 aa).

A domain I region spans residues 1–61 (MILYRIGEII…EYQYATYAFK (61 aa)). The domain II stretch occupies residues 62–139 (DFKERLLFVD…KMISPKDAAK (78 aa)). The segment at 140 to 144 (INETT) is flexible linker. The domain III stretch occupies residues 144–198 (TNTLSEVKETLKMVGFKTKQIDGALSKISSTDDVEKMIEEAIKLMSTQNYESATA).

This sequence belongs to the RuvA family. Homotetramer. Forms an RuvA(8)-RuvB(12)-Holliday junction (HJ) complex. HJ DNA is sandwiched between 2 RuvA tetramers; dsDNA enters through RuvA and exits via RuvB. An RuvB hexamer assembles on each DNA strand where it exits the tetramer. Each RuvB hexamer is contacted by two RuvA subunits (via domain III) on 2 adjacent RuvB subunits; this complex drives branch migration. In the full resolvosome a probable DNA-RuvA(4)-RuvB(12)-RuvC(2) complex forms which resolves the HJ.

It is found in the cytoplasm. Functionally, the RuvA-RuvB-RuvC complex processes Holliday junction (HJ) DNA during genetic recombination and DNA repair, while the RuvA-RuvB complex plays an important role in the rescue of blocked DNA replication forks via replication fork reversal (RFR). RuvA specifically binds to HJ cruciform DNA, conferring on it an open structure. The RuvB hexamer acts as an ATP-dependent pump, pulling dsDNA into and through the RuvAB complex. HJ branch migration allows RuvC to scan DNA until it finds its consensus sequence, where it cleaves and resolves the cruciform DNA. This chain is Holliday junction branch migration complex subunit RuvA, found in Mycoplasmopsis agalactiae (strain NCTC 10123 / CIP 59.7 / PG2) (Mycoplasma agalactiae).